The primary structure comprises 185 residues: Ribonuclease M5 (185 aa).

One can recognise a Toprim domain in the interval 3–84 (KEVIVVEGRD…KHARISQSEG (82 aa)). The Mg(2+) site is built by Glu-9, Asp-55, and Asp-57.

The protein belongs to the ribonuclease M5 family. Mg(2+) serves as cofactor.

The protein localises to the cytoplasm. It carries out the reaction Endonucleolytic cleavage of RNA, removing 21 and 42 nucleotides, respectively, from the 5'- and 3'-termini of a 5S-rRNA precursor.. In terms of biological role, required for correct processing of both the 5' and 3' ends of 5S rRNA precursor. Cleaves both sides of a double-stranded region yielding mature 5S rRNA in one step. This is Ribonuclease M5 from Clostridium acetobutylicum (strain ATCC 824 / DSM 792 / JCM 1419 / IAM 19013 / LMG 5710 / NBRC 13948 / NRRL B-527 / VKM B-1787 / 2291 / W).